The chain runs to 314 residues: MKPLIIIVGPTAVGKTALGVALAQALQGEIISGDSVQVYRKLDIGSAKPTLAEQGNVPHYLLDALDPAEPFTVAQFQTLANQSIQNIQSRGKVPIVVGGTGLYIRSLIDPFQFAEHGSESIRSFWTAFLSEQGKEALHRELAKRDPLSAQRLHPNDTVRIIRALEMCQLTGKPFSEIRGNQDMNYPPLPPSLLYVGLTAPREIIYERINRRCEQMVAAGLIEETHNLIKEGYSPKLKPLQSIGYRHALLYLYGKVTLPEMMRIFQRDTRHFAKRQLTWFRRDPRVVWYDTYSGNLTNILESLIGTCSGMESRVE.

9 to 16 (GPTAVGKT) contacts ATP. 11–16 (TAVGKT) is a substrate binding site. The interval 34 to 37 (DSVQ) is interaction with substrate tRNA.

The protein belongs to the IPP transferase family. Monomer. It depends on Mg(2+) as a cofactor.

The catalysed reaction is adenosine(37) in tRNA + dimethylallyl diphosphate = N(6)-dimethylallyladenosine(37) in tRNA + diphosphate. Catalyzes the transfer of a dimethylallyl group onto the adenine at position 37 in tRNAs that read codons beginning with uridine, leading to the formation of N6-(dimethylallyl)adenosine (i(6)A). This chain is tRNA dimethylallyltransferase, found in Desulfitobacterium hafniense (strain DSM 10664 / DCB-2).